Here is a 518-residue protein sequence, read N- to C-terminus: Protein CYCLOPS (518 aa).

The tract at residues 401 to 451 (DKKRKSLERYGSITSAVSDDKGDTTKKRRVERSRKMAEAKERNSTPSVPSD) is disordered. 2 short sequence motifs (nuclear localization signal) span residues 402–405 (KKRK) and 426–429 (KKRR). Over residues 433 to 443 (SRKMAEAKERN) the composition is skewed to basic and acidic residues. Residues 452 to 518 (MQAVLKRCEN…ERILSETEKM (67 aa)) are a coiled coil.

The protein belongs to the CYCLOPS family. Forms homodimers. Interacts with CCAMK. Post-translationally, phosphorylated at the N-terminus by CCAMK. In terms of tissue distribution, expressed in roots.

Its subcellular location is the nucleus. In terms of biological role, involved in symbiotic signaling. Required for root infection by symbiotic rhizobia, infection thread (IT) formation, and nodule development. Probably not involved in nodule organogenesis. Involved in arbuscular mycorrhizal (AM) symbiosis. Required for fungal infection of the outer cortical cell layers, and for arbuscule development during the AM symbiosis, by binding, as a complex comprising CCaMK, CYCLOPS, and DELLA, to RAM1 promoter cis element thus promoting its expression. Acts downstream of CCAMK. Binds to the promoter of ERN1 and strongly transactivates ERN1, a transcriptional regulator required for nodulation. The sequence is that of Protein CYCLOPS from Lotus japonicus (Lotus corniculatus var. japonicus).